The chain runs to 198 residues: Glycerol-3-phosphate acyltransferase (198 aa).

The next 5 helical transmembrane spans lie at 1-21 (MILI…IPAA), 52-72 (GPAL…VGLA), 81-101 (WTAL…FLGF), 115-135 (LALD…CIWL), and 153-173 (LAAA…LAAL).

The protein belongs to the PlsY family. Probably interacts with PlsX.

Its subcellular location is the cell membrane. The catalysed reaction is an acyl phosphate + sn-glycerol 3-phosphate = a 1-acyl-sn-glycero-3-phosphate + phosphate. It participates in lipid metabolism; phospholipid metabolism. Its function is as follows. Catalyzes the transfer of an acyl group from acyl-phosphate (acyl-PO(4)) to glycerol-3-phosphate (G3P) to form lysophosphatidic acid (LPA). This enzyme utilizes acyl-phosphate as fatty acyl donor, but not acyl-CoA or acyl-ACP. The chain is Glycerol-3-phosphate acyltransferase from Deinococcus geothermalis (strain DSM 11300 / CIP 105573 / AG-3a).